A 268-amino-acid polypeptide reads, in one-letter code: Undecaprenyl-diphosphatase (268 aa).

A run of 7 helical transmembrane segments spans residues 43–63, 85–105, 108–128, 141–161, 184–204, 217–237, and 246–266; these read FWKT…LAIY, IGVL…GTFI, VLFN…VLLW, AMAF…AAMV, AAEF…VYDV, FIII…VKTF, and FTFF…ALAL.

The protein belongs to the UppP family.

It is found in the cell inner membrane. It catalyses the reaction di-trans,octa-cis-undecaprenyl diphosphate + H2O = di-trans,octa-cis-undecaprenyl phosphate + phosphate + H(+). Its function is as follows. Catalyzes the dephosphorylation of undecaprenyl diphosphate (UPP). Confers resistance to bacitracin. The sequence is that of Undecaprenyl-diphosphatase from Afipia carboxidovorans (strain ATCC 49405 / DSM 1227 / KCTC 32145 / OM5) (Oligotropha carboxidovorans).